Here is a 423-residue protein sequence, read N- to C-terminus: NADP-specific glutamate dehydrogenase (423 aa).

The active site involves lysine 112.

Belongs to the Glu/Leu/Phe/Val dehydrogenases family. As to quaternary structure, homohexamer.

The catalysed reaction is L-glutamate + NADP(+) + H2O = 2-oxoglutarate + NH4(+) + NADPH + H(+). The sequence is that of NADP-specific glutamate dehydrogenase (gdhA) from Saccharolobus shibatae (strain ATCC 51178 / DSM 5389 / JCM 8931 / NBRC 15437 / B12) (Sulfolobus shibatae).